The sequence spans 82 residues: Ferredoxin (82 aa).

Positions 3–31 (KYTIVDKDTCIACGACGAAAPDIYDYDDE) constitute a 4Fe-4S ferredoxin-type domain. [4Fe-4S] cluster-binding residues include Cys12, Cys15, Cys18, and Cys62.

The cofactor is [4Fe-4S] cluster.

Its function is as follows. Ferredoxins are iron-sulfur proteins that transfer electrons in a wide variety of metabolic reactions. This ferredoxin may act as a phosphodonor to cytochrome P450 BioI. In Bacillus subtilis (strain 168), this protein is Ferredoxin (fer).